The chain runs to 363 residues: Probable F-box protein At4g22165 (363 aa).

One can recognise an F-box domain in the interval 7–56 (PNTWSELPLDLLNLVFKRLSLVNFQRAKSVCSTRYSVSRQCVPERQIALL).

The chain is Probable F-box protein At4g22165 from Arabidopsis thaliana (Mouse-ear cress).